A 37-amino-acid polypeptide reads, in one-letter code: Large ribosomal subunit protein bL36c (37 aa).

It belongs to the bacterial ribosomal protein bL36 family.

The protein resides in the plastid. It localises to the chloroplast. The polypeptide is Large ribosomal subunit protein bL36c (rpl36) (Pisum sativum (Garden pea)).